The primary structure comprises 236 residues: UPF0257 lipoprotein YnfC (236 aa).

A signal peptide spans 1–16 (MKKPLLLTLLCMILAG). Cys17 carries the N-palmitoyl cysteine lipid modification. Cys17 carries the S-diacylglycerol cysteine lipid modification.

Belongs to the UPF0257 family.

It localises to the cell membrane. This is UPF0257 lipoprotein YnfC from Salmonella heidelberg (strain SL476).